Reading from the N-terminus, the 155-residue chain is Phytohormone-binding protein CSBP (155 aa).

Residues leucine 22, glutamine 67, glutamate 69, and 139-142 (TLMY) contribute to the trans-zeatin site. Glutamine 67 is a binding site for gibberellin A3. A gibberellin A3-binding site is contributed by threonine 139.

This sequence belongs to the BetVI family. In terms of assembly, monomer.

In terms of biological role, binds the cytokinin trans-zeatin in vitro. Binds gibberellin A3 (GA3) in vitro. This is Phytohormone-binding protein CSBP from Vigna radiata var. radiata (Mung bean).